A 398-amino-acid polypeptide reads, in one-letter code: Phosphoglycerate kinase (398 aa).

Substrate is bound by residues 21–23, Arg36, 59–62, Arg119, and Arg157; these read DFN and HLGR. ATP-binding positions include Lys208, Gly296, Glu327, and 354-357; that span reads GGDS.

Belongs to the phosphoglycerate kinase family. In terms of assembly, monomer.

It is found in the cytoplasm. The enzyme catalyses (2R)-3-phosphoglycerate + ATP = (2R)-3-phospho-glyceroyl phosphate + ADP. It participates in carbohydrate degradation; glycolysis; pyruvate from D-glyceraldehyde 3-phosphate: step 2/5. The chain is Phosphoglycerate kinase (pgk) from Lactococcus lactis subsp. lactis (strain IL1403) (Streptococcus lactis).